Reading from the N-terminus, the 449-residue chain is Trigger factor (449 aa).

Residues 169-254 (GDRITVDFVG…AKQVEAPGEL (86 aa)) form the PPIase FKBP-type domain.

This sequence belongs to the FKBP-type PPIase family. Tig subfamily.

The protein resides in the cytoplasm. It carries out the reaction [protein]-peptidylproline (omega=180) = [protein]-peptidylproline (omega=0). Functionally, involved in protein export. Acts as a chaperone by maintaining the newly synthesized protein in an open conformation. Functions as a peptidyl-prolyl cis-trans isomerase. The protein is Trigger factor of Azorhizobium caulinodans (strain ATCC 43989 / DSM 5975 / JCM 20966 / LMG 6465 / NBRC 14845 / NCIMB 13405 / ORS 571).